The following is a 465-amino-acid chain: Intraflagellar transport protein 54 (465 aa).

Disordered regions lie at residues 119–301 and 347–366; these read VRSN…GFTM and LHGDGSKKPTGLSTQRDKKP. A coiled-coil region spans residues 144–207; it reads LEALAREKAE…KQKQQQQQQQ (64 aa). The span at 146–198 shows a compositional bias: basic and acidic residues; it reads ALAREKAEKERQRREQEQQERERKERERQEKEREEREKHELESRERAEAEQWK. A compositionally biased stretch (low complexity) spans 199–220; sequence QKQQQQQQQQQSAISPQKSPPK. Residues 222–242 are compositionally biased toward basic and acidic residues; sequence RFADDDKTRVEEHQPVIERPH.

This sequence belongs to the TRAF3IP1 family.

Its subcellular location is the cell projection. It localises to the cilium. It is found in the flagellum. The protein resides in the cytoplasm. The protein localises to the cytoskeleton. Its subcellular location is the flagellum axoneme. It localises to the flagellum basal body. Functionally, component of the intraflagellar transport complex B (IFT-B) involved in flagellar assembly. This Giardia intestinalis (strain ATCC 50803 / WB clone C6) (Giardia lamblia) protein is Intraflagellar transport protein 54.